We begin with the raw amino-acid sequence, 358 residues long: Phosphoserine aminotransferase (358 aa).

R43 serves as a coordination point for L-glutamate. W103, T153, D172, and Q195 together coordinate pyridoxal 5'-phosphate. K196 carries the N6-(pyridoxal phosphate)lysine modification. A pyridoxal 5'-phosphate-binding site is contributed by 236-237; that stretch reads NT.

Belongs to the class-V pyridoxal-phosphate-dependent aminotransferase family. SerC subfamily. In terms of assembly, homodimer. The cofactor is pyridoxal 5'-phosphate.

The protein localises to the cytoplasm. It catalyses the reaction O-phospho-L-serine + 2-oxoglutarate = 3-phosphooxypyruvate + L-glutamate. The catalysed reaction is 4-(phosphooxy)-L-threonine + 2-oxoglutarate = (R)-3-hydroxy-2-oxo-4-phosphooxybutanoate + L-glutamate. Its pathway is amino-acid biosynthesis; L-serine biosynthesis; L-serine from 3-phospho-D-glycerate: step 2/3. It functions in the pathway cofactor biosynthesis; pyridoxine 5'-phosphate biosynthesis; pyridoxine 5'-phosphate from D-erythrose 4-phosphate: step 3/5. Functionally, catalyzes the reversible conversion of 3-phosphohydroxypyruvate to phosphoserine and of 3-hydroxy-2-oxo-4-phosphonooxybutanoate to phosphohydroxythreonine. The protein is Phosphoserine aminotransferase of Dichelobacter nodosus (strain VCS1703A).